A 524-amino-acid polypeptide reads, in one-letter code: Histidine ammonia-lyase (524 aa).

The segment at residues 139–141 is a cross-link (5-imidazolinone (Ala-Gly)); the sequence is ASG. 2,3-didehydroalanine (Ser) is present on serine 140. Residues 500–524 are disordered; it reads ADTQAPAPAKLPDSGDEDRDTTSRH.

It belongs to the PAL/histidase family. Post-translationally, contains an active site 4-methylidene-imidazol-5-one (MIO), which is formed autocatalytically by cyclization and dehydration of residues Ala-Ser-Gly.

The protein resides in the cytoplasm. It catalyses the reaction L-histidine = trans-urocanate + NH4(+). The protein operates within amino-acid degradation; L-histidine degradation into L-glutamate; N-formimidoyl-L-glutamate from L-histidine: step 1/3. The chain is Histidine ammonia-lyase (hutH) from Deinococcus radiodurans (strain ATCC 13939 / DSM 20539 / JCM 16871 / CCUG 27074 / LMG 4051 / NBRC 15346 / NCIMB 9279 / VKM B-1422 / R1).